The chain runs to 4749 residues: Dynein heavy chain domain-containing protein 1 (4749 aa).

Low complexity predominate over residues 1-18 (MKPHSQTSPPSLPMPSTS). Disordered stretches follow at residues 1–27 (MKPH…TQKP), 275–308 (ESSD…KKSS), and 2690–2785 (ESLA…KLQS). The span at 2696 to 2716 (CEEEEVEEEKVPEVESEEEIA) shows a compositional bias: acidic residues. Positions 2738 to 2749 (QATTGSFLSENS) are enriched in polar residues. Residues 3197–3224 (CQHQESLIENLVRQHDALKAQQEVFLEQ) are a coiled coil. The interval 3568–3667 (PPKQNRSLEP…SLPSCLTVLS (100 aa)) is disordered. Residues 3578 to 3593 (SPKESKEKFHVTKQDS) show a composition bias toward basic and acidic residues. A coiled-coil region spans residues 3594–3636 (GDNTEDELEDENNEEEDEANEQRKEQKAEENKIQGENEQEVQE). Over residues 3595 to 3612 (DNTEDELEDENNEEEDEA) the composition is skewed to acidic residues. Over residues 3613–3628 (NEQRKEQKAEENKIQG) the composition is skewed to basic and acidic residues. Over residues 3644–3655 (ESSGSHSSLPSE) the composition is skewed to low complexity. A compositionally biased stretch (polar residues) spans 3656 to 3667 (TQSLPSCLTVLS). 2 coiled-coil regions span residues 3818–3838 (MVRT…LEDQ) and 4431–4451 (ERQL…LQAL).

This sequence belongs to the dynein heavy chain family. In terms of tissue distribution, expressed in spermatozoa (at protein level).

It is found in the cell projection. The protein resides in the cilium. Its subcellular location is the flagellum. Its function is as follows. Essential for the normal function of sperm flagella axonemes. In Mus musculus (Mouse), this protein is Dynein heavy chain domain-containing protein 1 (Dnhd1).